A 185-amino-acid polypeptide reads, in one-letter code: Ribosome-recycling factor (185 aa).

The disordered stretch occupies residues 137 to 166 (DGLKKAEKDGDIGQDESRGQSEKVQKMTDD).

This sequence belongs to the RRF family.

The protein resides in the cytoplasm. Functionally, responsible for the release of ribosomes from messenger RNA at the termination of protein biosynthesis. May increase the efficiency of translation by recycling ribosomes from one round of translation to another. In Agrobacterium fabrum (strain C58 / ATCC 33970) (Agrobacterium tumefaciens (strain C58)), this protein is Ribosome-recycling factor.